Here is a 117-residue protein sequence, read N- to C-terminus: Protein TCL1B2 (117 aa).

This sequence belongs to the TCL1 family.

This is Protein TCL1B2 (Tcl1b2) from Mus musculus (Mouse).